Reading from the N-terminus, the 578-residue chain is Phosphatase DCR2 (578 aa).

116-123 (GRRWFGKS) contacts ATP.

The protein resides in the cytoplasm. Required for cell cycle progression. Has a role in the completion of START. The chain is Phosphatase DCR2 (DCR2) from Saccharomyces cerevisiae (strain ATCC 204508 / S288c) (Baker's yeast).